The following is a 133-amino-acid chain: Protein U17 (133 aa).

Residues 82 to 102 (FVSVLWCVILVFVVKIKLFFL) form a helical membrane-spanning segment.

Its subcellular location is the membrane. The protein is Protein U17 (U17/U16) of Homo sapiens (Human).